Consider the following 284-residue polypeptide: NAD kinase (284 aa).

Asp70 (proton acceptor) is an active-site residue. NAD(+)-binding positions include 70–71 (DG), 139–140 (NE), Lys167, Asp169, Leu177, 180–185 (TAYNLS), and Gln236.

Belongs to the NAD kinase family. A divalent metal cation serves as cofactor.

The protein localises to the cytoplasm. It catalyses the reaction NAD(+) + ATP = ADP + NADP(+) + H(+). Involved in the regulation of the intracellular balance of NAD and NADP, and is a key enzyme in the biosynthesis of NADP. Catalyzes specifically the phosphorylation on 2'-hydroxyl of the adenosine moiety of NAD to yield NADP. In Helicobacter pylori (strain G27), this protein is NAD kinase.